Consider the following 124-residue polypeptide: uncharacterized protein (124 aa).

Positions 1 to 21 are cleaved as a signal peptide; the sequence is MFLLSLLHFFHPSLIPSLSLS.

This is an uncharacterized protein from Schizosaccharomyces pombe (strain 972 / ATCC 24843) (Fission yeast).